The sequence spans 460 residues: NADH-ubiquinone oxidoreductase chain 4 (460 aa).

A run of 13 helical transmembrane segments spans residues 20 to 42, 61 to 81, 94 to 113, 114 to 134, 148 to 168, 195 to 215, 225 to 245, 258 to 278, 285 to 304, 308 to 330, 351 to 371, 380 to 400, and 436 to 456; these read SKWL…LTWL, PLST…ILAS, RMYI…AFGA, TKII…LIII, TYFL…LLLL, IWWA…GMHL, PVAG…YGMM, LAYP…LVCL, SLIA…GILI, WGFT…LFCL, MVLP…LALP, LMII…TGMG, and LLMT…ELMW.

This sequence belongs to the complex I subunit 4 family. Core subunit of respiratory chain NADH dehydrogenase (Complex I) which is composed of 45 different subunits.

Its subcellular location is the mitochondrion inner membrane. The catalysed reaction is a ubiquinone + NADH + 5 H(+)(in) = a ubiquinol + NAD(+) + 4 H(+)(out). In terms of biological role, core subunit of the mitochondrial membrane respiratory chain NADH dehydrogenase (Complex I) which catalyzes electron transfer from NADH through the respiratory chain, using ubiquinone as an electron acceptor. Essential for the catalytic activity and assembly of complex I. The protein is NADH-ubiquinone oxidoreductase chain 4 (mt-nd4) of Danio rerio (Zebrafish).